We begin with the raw amino-acid sequence, 203 residues long: Abscisic acid receptor PYL5 (203 aa).

A compositionally biased stretch (polar residues) spans Met1–His18. A disordered region spans residues Met1 to Pro29. The tract at residues His51–Asn201 is START-like. Residues Lys87, Ala117 to Glu122, Arg144 to Ser150, and Glu166 contribute to the abscisate site. The Gate loop motif lies at Ser113–Ala117. The Latch loop signature appears at His143–Leu145.

Belongs to the PYR/PYL/RCAR abscisic acid intracellular receptor family. Monomer. Homodimer. Binds ABA on one subunit only. Binds to CARs protein in an ABA-independent manner, both at the plasma membrane and in the nucleus. Binds both (-)-ABA and (+)-ABA. Interacts with HAB1, ABI1 and ABI2, and possibly with other PP2Cs.

It localises to the cytoplasm. The protein resides in the nucleus. It is found in the cell membrane. In terms of biological role, receptor for abscisic acid (ABA) required for ABA-mediated responses such as stomatal closure and germination inhibition. Inhibits the activity of group-A protein phosphatases type 2C (PP2Cs) in an ABA-independent manner but more efficiently when activated by ABA. Confers enhanced sensitivity to ABA. Can be activated by both (-)-ABA and (+)-ABA. In Arabidopsis thaliana (Mouse-ear cress), this protein is Abscisic acid receptor PYL5 (PYL5).